The following is a 199-amino-acid chain: NAD(P)H dehydrogenase (quinone) (199 aa).

A Flavodoxin-like domain is found at 4–190 (ILVLYYSMYG…TIARYQGEHV (187 aa)). Residues 10-15 (SMYGHI) and 79-81 (TRF) contribute to the FMN site. Y12 contacts NAD(+). W99 contributes to the substrate binding site. FMN-binding positions include 114–119 (STGTGG) and H134.

This sequence belongs to the WrbA family. Requires FMN as cofactor.

The catalysed reaction is a quinone + NADH + H(+) = a quinol + NAD(+). It catalyses the reaction a quinone + NADPH + H(+) = a quinol + NADP(+). The chain is NAD(P)H dehydrogenase (quinone) from Serratia proteamaculans (strain 568).